The following is a 379-amino-acid chain: Copper-containing nitrite reductase (379 aa).

Positions 1–32 form a signal peptide, tat-type signal; sequence MSEQFRLTRRSMLAGAAVAGALAPVVTSVAHA. Plastocyanin-like domains follow at residues 33–214 and 215–379; these read EGGG…YDKV and YYVG…PTSG. His134, His139, His174, Cys175, His184, Met189, and His345 together coordinate Cu cation.

This sequence belongs to the multicopper oxidase family. As to quaternary structure, homotrimer. It depends on Cu(2+) as a cofactor. Cu(+) serves as cofactor. Requires FAD as cofactor. Post-translationally, predicted to be exported by the Tat system. The position of the signal peptide cleavage has not been experimentally proven.

It is found in the periplasm. The catalysed reaction is nitric oxide + Fe(III)-[cytochrome c] + H2O = Fe(II)-[cytochrome c] + nitrite + 2 H(+). It participates in nitrogen metabolism; nitrate reduction (denitrification); dinitrogen from nitrate: step 2/4. The sequence is that of Copper-containing nitrite reductase (nirU) from Neorhizobium galegae (Rhizobium galegae).